The primary structure comprises 60 residues: Cecropin-B type 2 (60 aa).

Residues 1-24 form the signal peptide; the sequence is MNFSKLFALVLLIGLVLLTGQTEA. The residue at position 58 (Ile-58) is an Isoleucine amide.

This sequence belongs to the cecropin family.

The protein localises to the secreted. In terms of biological role, cecropins have lytic and antibacterial activity against several Gram-positive and Gram-negative bacteria. The sequence is that of Cecropin-B type 2 (CECB2) from Aedes albopictus (Asian tiger mosquito).